Reading from the N-terminus, the 135-residue chain is Photosystem II extrinsic protein U (135 aa).

The N-terminal stretch at 1–29 (MKRLLSWLTGALLMAGLLAGLILPGSVHA) is a signal peptide.

The protein belongs to the PsbU family. In terms of assembly, PSII is composed of 1 copy each of membrane proteins PsbA, PsbB, PsbC, PsbD, PsbE, PsbF, PsbH, PsbI, PsbJ, PsbK, PsbL, PsbM, PsbT, PsbX, PsbY, Psb30/Ycf12, peripheral proteins PsbO, CyanoQ (PsbQ), PsbU, PsbV and a large number of cofactors. It forms dimeric complexes.

The protein resides in the cellular thylakoid membrane. One of the extrinsic, lumenal subunits of photosystem II (PSII). PSII is a light-driven water plastoquinone oxidoreductase, using light energy to abstract electrons from H(2)O, generating a proton gradient subsequently used for ATP formation. The extrinsic proteins stabilize the structure of photosystem II oxygen-evolving complex (OEC), the ion environment of oxygen evolution and protect the OEC against heat-induced inactivation. The polypeptide is Photosystem II extrinsic protein U (Parasynechococcus marenigrum (strain WH8102)).